The following is a 33-amino-acid chain: Zinc metalloproteinase-disintegrin-like moojenin (33 aa).

Residues 8–33 (PPVCGNELLEVGEECDCGTPENCQNE) form the Disintegrin domain. Ca(2+) is bound by residues Val-10, Asn-13, Leu-15, Glu-17, Glu-20, and Asp-23. 2 cysteine pairs are disulfide-bonded: Cys-11-Cys-30 and Cys-24-Cys-30.

The protein belongs to the venom metalloproteinase (M12B) family. P-III subfamily. P-IIIb sub-subfamily. As to quaternary structure, monomer. The cofactor is Zn(2+). In terms of processing, the N-terminus (from the N-terminal region of the metalloproteinase domain) is blocked. Expressed by the venom gland.

It localises to the secreted. Its activity is regulated as follows. The fibrinogenolytic and coagulant activities of the moojenin were abolished by preincubation with EDTA, 1,10-phenanthroline and beta-mercaptoethanol. Functionally, metalloproteinase moojenin: snake venom metalloproteinase that cleaves both alpha- and beta-chains of fibrinogen, but not the gamma-chain. Shows a coagulant activity on bovine plasma about 3.1 fold lower than crude venom. Renders the blood incoagulable when intraperitoneally administered into mice. Induces necrosis in liver and muscle, but does not cause histological alterations in mouse lungs, kidney or heart. The polypeptide is Zinc metalloproteinase-disintegrin-like moojenin (Bothrops moojeni (Lance-headed viper)).